A 453-amino-acid polypeptide reads, in one-letter code: Ribulose bisphosphate carboxylase large chain (453 aa).

Positions 1–2 (MS) are excised as a propeptide. Pro3 bears the N-acetylproline mark. Position 14 is an N6,N6,N6-trimethyllysine (Lys14). Residues Asn123 and Thr173 each contribute to the substrate site. Lys175 acts as the Proton acceptor in catalysis. Residue Lys177 participates in substrate binding. Mg(2+) is bound by residues Lys201, Asp203, and Glu204. An N6-carboxylysine modification is found at Lys201. Catalysis depends on His294, which acts as the Proton acceptor. Substrate is bound by residues Arg295, His327, and Ser379.

This sequence belongs to the RuBisCO large chain family. Type I subfamily. In terms of assembly, heterohexadecamer of 8 large chains and 8 small chains; disulfide-linked. The disulfide link is formed within the large subunit homodimers. The cofactor is Mg(2+). Post-translationally, the disulfide bond which can form in the large chain dimeric partners within the hexadecamer appears to be associated with oxidative stress and protein turnover.

Its subcellular location is the plastid. The protein resides in the chloroplast. It carries out the reaction 2 (2R)-3-phosphoglycerate + 2 H(+) = D-ribulose 1,5-bisphosphate + CO2 + H2O. The catalysed reaction is D-ribulose 1,5-bisphosphate + O2 = 2-phosphoglycolate + (2R)-3-phosphoglycerate + 2 H(+). Functionally, ruBisCO catalyzes two reactions: the carboxylation of D-ribulose 1,5-bisphosphate, the primary event in carbon dioxide fixation, as well as the oxidative fragmentation of the pentose substrate in the photorespiration process. Both reactions occur simultaneously and in competition at the same active site. This chain is Ribulose bisphosphate carboxylase large chain, found in Galium aparine (Catchweed bedstraw).